Here is a 117-residue protein sequence, read N- to C-terminus: Acrylate reductase cytochrome subunit (117 aa).

An N-terminal signal peptide occupies residues 1-22 (MKMYKLMLGLVLAGLVSLSAQA). Residues His-29, Cys-37, Cys-40, His-41, Cys-54, Cys-57, His-58, His-79, His-83, Cys-90, Cys-93, His-94, His-97, Cys-104, Cys-107, and His-108 each coordinate heme c.

The ArdAB flavocytochrome c is composed of a FAD-containing subunit (ArdA) and a heme c-containing subunit (ArdB). The cofactor is heme c.

The protein resides in the periplasm. Its activity is regulated as follows. Methacrylate acts as a competitive inhibitor of the acrylate reductase activity and suppresses the reductase activity in dose-dependent manner. Heme c-containing subunit of the ArdAB flavocytochrome c, which catalyzes the reduction of acrylate to propanoate and supports dimethylsulfoniopropionate-dependent anaerobic respiration. In vitro, can use the artificial electron donor methyl viologen. The natural electron donor is probably a low-potential cytochrome c. Also shows weak activity toward methacrylate in vitro (at a 22-fold lower rate) but cannot use other tested 2-enoates, including crotonic, fumaric, sorbic, urocanic, cinnamic, p-coumaric, caffeic or ferulic acids. The protein catalyzes a unidirectional reaction and cannot oxidize propanoate with phenazine metasulfate and dichlorophenolindophenol as electron acceptors. This chain is Acrylate reductase cytochrome subunit, found in Shewanella woodyi (strain ATCC 51908 / MS32).